Reading from the N-terminus, the 601-residue chain is Probable cytochrome P450 525A1 (601 aa).

Residues 12–32 form a helical membrane-spanning segment; it reads ISYFLTCSIFGFILWILTEQI. The tract at residues 205-253 is disordered; it reads NNNNNNNNNNNNNNNNNNNNNNNNNNNNNNNNNNNNNNNNNNNNNNNNN. Position 544 (Cys544) interacts with heme.

Belongs to the cytochrome P450 family. Heme serves as cofactor.

The protein resides in the membrane. In Dictyostelium discoideum (Social amoeba), this protein is Probable cytochrome P450 525A1 (cyp525A1).